Reading from the N-terminus, the 59-residue chain is Large ribosomal subunit protein bL32 (59 aa).

2 disordered regions span residues 1–23 and 35–59; these read MAVQ…DFLT and EVHL…TKND. Over residues 49-59 the composition is skewed to basic residues; it reads RGKKVVKTKND.

It belongs to the bacterial ribosomal protein bL32 family.

This is Large ribosomal subunit protein bL32 from Burkholderia ambifaria (strain MC40-6).